The sequence spans 637 residues: 1-deoxy-D-xylulose-5-phosphate synthase (637 aa).

Thiamine diphosphate is bound by residues His-71 and 112–114 (SHA). A Mg(2+)-binding site is contributed by Asp-144. Residues 145–146 (GA), Asn-173, Tyr-284, and Glu-365 each bind thiamine diphosphate. Position 173 (Asn-173) interacts with Mg(2+).

It belongs to the transketolase family. DXPS subfamily. As to quaternary structure, homodimer. Mg(2+) serves as cofactor. It depends on thiamine diphosphate as a cofactor.

The catalysed reaction is D-glyceraldehyde 3-phosphate + pyruvate + H(+) = 1-deoxy-D-xylulose 5-phosphate + CO2. Its pathway is metabolic intermediate biosynthesis; 1-deoxy-D-xylulose 5-phosphate biosynthesis; 1-deoxy-D-xylulose 5-phosphate from D-glyceraldehyde 3-phosphate and pyruvate: step 1/1. Functionally, catalyzes the acyloin condensation reaction between C atoms 2 and 3 of pyruvate and glyceraldehyde 3-phosphate to yield 1-deoxy-D-xylulose-5-phosphate (DXP). In Mycolicibacterium vanbaalenii (strain DSM 7251 / JCM 13017 / BCRC 16820 / KCTC 9966 / NRRL B-24157 / PYR-1) (Mycobacterium vanbaalenii), this protein is 1-deoxy-D-xylulose-5-phosphate synthase.